A 300-amino-acid polypeptide reads, in one-letter code: Cation-efflux pump FieF (300 aa).

A helical transmembrane segment spans residues 24–44 (LLIKIFAWWYTGSVSILAALV). Positions 45 and 49 each coordinate Zn(2+). 2 consecutive transmembrane segments (helical) span residues 82 to 102 (AALA…LTSI) and 114 to 134 (PGVG…LVTF). Zn(2+) contacts are provided by His-153 and Asp-157. The next 2 membrane-spanning stretches (helical) occupy residues 156 to 176 (SDVM…YGWH) and 178 to 198 (ADAL…LRMG).

The protein belongs to the cation diffusion facilitator (CDF) transporter (TC 2.A.4) family. FieF subfamily. Homodimer.

It localises to the cell inner membrane. The catalysed reaction is Zn(2+)(in) + H(+)(out) = Zn(2+)(out) + H(+)(in). It catalyses the reaction Cd(2+)(in) + H(+)(out) = Cd(2+)(out) + H(+)(in). The enzyme catalyses Fe(2+)(in) + H(+)(out) = Fe(2+)(out) + H(+)(in). Its function is as follows. Divalent metal cation transporter which exports Zn(2+), Cd(2+) and possibly Fe(2+). May be involved in zinc and iron detoxification by efflux. This Salmonella schwarzengrund (strain CVM19633) protein is Cation-efflux pump FieF.